A 226-amino-acid polypeptide reads, in one-letter code: Transmembrane gamma-carboxyglutamic acid protein 4 (226 aa).

Positions Met-1–Gly-17 are cleaved as a signal peptide. A propeptide spanning residues Phe-18 to Arg-49 is cleaved from the precursor. The Extracellular portion of the chain corresponds to Leu-50–Asp-113. In terms of domain architecture, Gla spans Tyr-52–Ala-98. The cysteines at positions 69 and 74 are disulfide-linked. Glu-72 is subject to 4-carboxyglutamate. Residues Val-114–Leu-134 form a helical membrane-spanning segment. The Cytoplasmic portion of the chain corresponds to Gly-135–His-226. At Ser-163 the chain carries Phosphoserine. Positions Leu-186 to Tyr-189 match the LPXY motif; mediates binding to WW domain-containing proteins motif. Residues Pro-204–Tyr-207 carry the PPXY motif; mediates binding to WW domain-containing proteins motif.

This sequence belongs to the commissureless family. As to quaternary structure, interacts (via cytoplasmic domain) with WW domain-containing proteins MAGI1, MAGI3, NEDD4, NEDD4L, WWTR1/TAZ and YAP1. Post-translationally, gamma-carboxyglutamate residues are formed by vitamin K dependent carboxylation. These residues are essential for the binding of calcium. In terms of tissue distribution, widely expressed with highest levels in kidney.

Its subcellular location is the endoplasmic reticulum-Golgi intermediate compartment membrane. It is found in the cell membrane. Its function is as follows. May control axon guidance across the CNS. Prevents the delivery of ROBO1 at the cell surface and down-regulates its expression. The chain is Transmembrane gamma-carboxyglutamic acid protein 4 from Homo sapiens (Human).